We begin with the raw amino-acid sequence, 114 residues long: Fumarate reductase subunit D (114 aa).

3 helical membrane-spanning segments follow: residues 24–44 (VSAIFLPVVILIIGLLLPFGL), 50–70 (LITFAYSWIGKLVILVLTIFP), and 92–112 (GGFIFYGLATIYTVWVLFAVI).

Belongs to the FrdD family. In terms of assembly, part of an enzyme complex containing four subunits: a flavoprotein (FrdA), an iron-sulfur protein (FrdB), and two hydrophobic anchor proteins (FrdC and FrdD).

It is found in the cell inner membrane. Functionally, anchors the catalytic components of the fumarate reductase complex to the cell membrane, binds quinones. The chain is Fumarate reductase subunit D from Haemophilus influenzae (strain ATCC 51907 / DSM 11121 / KW20 / Rd).